Reading from the N-terminus, the 539-residue chain is Propionyl-CoA carboxylase beta chain, mitochondrial (539 aa).

The transit peptide at 1–28 (MAAALRVAAVGARLSVLASGLRAAVRSL) directs the protein to the mitochondrion. A CoA carboxyltransferase N-terminal domain is found at 32 to 290 (ATSVNERIEN…SSQDPAPVRE (259 aa)). Positions 32 to 533 (ATSVNERIEN…SKKVQRPWRK (502 aa)) are carboxyltransferase. S71 is modified (phosphoserine). K99 is modified (N6-acetyllysine; alternate). K99 is subject to N6-succinyllysine; alternate. K248 is modified (N6-succinyllysine). In terms of domain architecture, CoA carboxyltransferase C-terminal spans 294–533 (PSDRLVPELD…SKKVQRPWRK (240 aa)). Residues 325 to 358 (DEREFFEIMPNYAKNIIVGFARMNGRTVGIVGNQ) are acyl-CoA binding. 2 positions are modified to N6-acetyllysine; alternate: K474 and K489. An N6-succinyllysine; alternate mark is found at K474 and K489.

Belongs to the AccD/PCCB family. As to quaternary structure, the holoenzyme is a dodecamer composed of 6 PCCA/alpha subunits and 6 PCCB/beta subunits.

Its subcellular location is the mitochondrion matrix. The enzyme catalyses propanoyl-CoA + hydrogencarbonate + ATP = (S)-methylmalonyl-CoA + ADP + phosphate + H(+). It carries out the reaction butanoyl-CoA + hydrogencarbonate + ATP = (2S)-ethylmalonyl-CoA + ADP + phosphate + H(+). It participates in metabolic intermediate metabolism; propanoyl-CoA degradation; succinyl-CoA from propanoyl-CoA: step 1/3. Functionally, this is one of the 2 subunits of the biotin-dependent propionyl-CoA carboxylase (PCC), a mitochondrial enzyme involved in the catabolism of odd chain fatty acids, branched-chain amino acids isoleucine, threonine, methionine, and valine and other metabolites. Propionyl-CoA carboxylase catalyzes the carboxylation of propionyl-CoA/propanoyl-CoA to D-methylmalonyl-CoA/(S)-methylmalonyl-CoA. Within the holoenzyme, the alpha subunit catalyzes the ATP-dependent carboxylation of the biotin carried by the biotin carboxyl carrier (BCC) domain, while the beta subunit then transfers the carboxyl group from carboxylated biotin to propionyl-CoA. Propionyl-CoA carboxylase also significantly acts on butyryl-CoA/butanoyl-CoA, which is converted to ethylmalonyl-CoA/(2S)-ethylmalonyl-CoA at a much lower rate. Other alternative minor substrates include (2E)-butenoyl-CoA/crotonoyl-CoA. This Homo sapiens (Human) protein is Propionyl-CoA carboxylase beta chain, mitochondrial.